The chain runs to 201 residues: uncharacterized protein (201 aa).

The protein belongs to the phosphatidylethanolamine-binding protein family.

This is an uncharacterized protein from Saccharomyces cerevisiae (strain ATCC 204508 / S288c) (Baker's yeast).